Reading from the N-terminus, the 530-residue chain is ATP synthase subunit alpha (530 aa).

172–179 is an ATP binding site; sequence GDRQTGKT.

The protein belongs to the ATPase alpha/beta chains family. As to quaternary structure, F-type ATPases have 2 components, CF(1) - the catalytic core - and CF(0) - the membrane proton channel. CF(1) has five subunits: alpha(3), beta(3), gamma(1), delta(1), epsilon(1). CF(0) has three main subunits: a(1), b(2) and c(9-12). The alpha and beta chains form an alternating ring which encloses part of the gamma chain. CF(1) is attached to CF(0) by a central stalk formed by the gamma and epsilon chains, while a peripheral stalk is formed by the delta and b chains.

The protein localises to the cell inner membrane. It catalyses the reaction ATP + H2O + 4 H(+)(in) = ADP + phosphate + 5 H(+)(out). Produces ATP from ADP in the presence of a proton gradient across the membrane. The alpha chain is a regulatory subunit. The polypeptide is ATP synthase subunit alpha (Phocaeicola vulgatus (strain ATCC 8482 / DSM 1447 / JCM 5826 / CCUG 4940 / NBRC 14291 / NCTC 11154) (Bacteroides vulgatus)).